A 501-amino-acid chain; its full sequence is Aspartyl/glutamyl-tRNA(Asn/Gln) amidotransferase subunit B (501 aa).

Residues 272–291 (QETRHYQETDGTTSKGRPKE) form a disordered region.

It belongs to the GatB/GatE family. GatB subfamily. As to quaternary structure, heterotrimer of A, B and C subunits.

The enzyme catalyses L-glutamyl-tRNA(Gln) + L-glutamine + ATP + H2O = L-glutaminyl-tRNA(Gln) + L-glutamate + ADP + phosphate + H(+). The catalysed reaction is L-aspartyl-tRNA(Asn) + L-glutamine + ATP + H2O = L-asparaginyl-tRNA(Asn) + L-glutamate + ADP + phosphate + 2 H(+). In terms of biological role, allows the formation of correctly charged Asn-tRNA(Asn) or Gln-tRNA(Gln) through the transamidation of misacylated Asp-tRNA(Asn) or Glu-tRNA(Gln) in organisms which lack either or both of asparaginyl-tRNA or glutaminyl-tRNA synthetases. The reaction takes place in the presence of glutamine and ATP through an activated phospho-Asp-tRNA(Asn) or phospho-Glu-tRNA(Gln). This is Aspartyl/glutamyl-tRNA(Asn/Gln) amidotransferase subunit B from Corynebacterium efficiens (strain DSM 44549 / YS-314 / AJ 12310 / JCM 11189 / NBRC 100395).